A 330-amino-acid chain; its full sequence is Phenylalanine--tRNA ligase alpha subunit (330 aa).

Glu-257 contacts Mg(2+).

Belongs to the class-II aminoacyl-tRNA synthetase family. Phe-tRNA synthetase alpha subunit type 1 subfamily. In terms of assembly, tetramer of two alpha and two beta subunits. Mg(2+) is required as a cofactor.

The protein localises to the cytoplasm. It catalyses the reaction tRNA(Phe) + L-phenylalanine + ATP = L-phenylalanyl-tRNA(Phe) + AMP + diphosphate + H(+). This Nostoc punctiforme (strain ATCC 29133 / PCC 73102) protein is Phenylalanine--tRNA ligase alpha subunit.